Consider the following 262-residue polypeptide: Small ribosomal subunit protein eS4 (262 aa).

In terms of domain architecture, S4 RNA-binding spans 42 to 104 (LPLLIFLRNR…TGEFFRLIYD (63 aa)).

It belongs to the eukaryotic ribosomal protein eS4 family.

The polypeptide is Small ribosomal subunit protein eS4 (RpS4) (Lysiphlebus testaceipes (Greenbugs aphid parastoid)).